A 165-amino-acid chain; its full sequence is MIYAVFIFNNKGKPRLTKFYTPIDESIQQKLIGDIYAAVSTRPPTACNFLESNLIAGKNRIIYRQYATLYFVFVVDEGESELGILDLIQVFVEALDRCFNNVCELDLVFKFQEIHAILAEVVSGGLVLETNLNEIVLAAQNQMPKTKRSNAMPFSNTLSSFATRF.

It belongs to the adaptor complexes small subunit family. Adaptor protein complex 3 (AP-3) is a heterotetramer composed of 2 large adaptins (apl5 and apl6), a medium adaptin (apm3) and a small adaptin (aps3).

The protein localises to the golgi apparatus. The protein resides in the cytoplasmic vesicle membrane. In terms of biological role, part of the AP-3 complex, an adaptor-related complex which is not clathrin-associated. The complex is associated with the Golgi region as well as more peripheral structures. It facilitates the budding of vesicles from the Golgi membrane and may be directly involved in trafficking to the vacuole. This chain is AP-3 complex subunit sigma (aps3), found in Schizosaccharomyces pombe (strain 972 / ATCC 24843) (Fission yeast).